A 177-amino-acid polypeptide reads, in one-letter code: Large ribosomal subunit protein uL6 (177 aa).

This sequence belongs to the universal ribosomal protein uL6 family. Part of the 50S ribosomal subunit.

This protein binds to the 23S rRNA, and is important in its secondary structure. It is located near the subunit interface in the base of the L7/L12 stalk, and near the tRNA binding site of the peptidyltransferase center. The protein is Large ribosomal subunit protein uL6 of Paracidovorax citrulli (strain AAC00-1) (Acidovorax citrulli).